The following is a 1019-amino-acid chain: MPRSSATARKSHSNRHENGSANTGKKVAKQKSNGHLNGNLNGGSASSSLSSSQVDLPSSRSSSDPVVPTTTAASTKLNGTPDSSKGDCNAPDHLNGYAKGNADMSYVQNDGVASQTGGDVAGPASRRTEKSATGSKRSPSNASVNPLQLASTILKSCPMYDTIAILIFLLQLPPMVLTLVQFLFASLTFLPPSGASAGSLTSNFDIFQGPAGTPSLGTMIAMDGFCLLIWGLFMWTWAQNFALDLAHVQVAITLGGGGFGKNGGVNTLCVGIVLIMHLVRSKGIQDFVIGHLLSSNIISPDMLSQYSHLLPTEFRRTEPQTSPSWLRSLLAVHILAQAGTAMARRSMAKNRTPNPPRTGKRIDTEASAGSQTQIDSAFESGASVSSYIGADGQIVTSAAHKDGRDRLLSAKKRRRQANQVRSRQPFWAALASTKITVMREYEHSRALSKTARSLPMTEDDLQGLSLDDGLVWITEIDSSTIKFAAGDFSSADDSSGSGACEAGCLGSEDMEPFYVCVNGALWATATICKVHDAPKGSSMVHWRGEISGLAPNCAYTCSFVRSDTDEEICVISVKTPANNDAEQVSSVSTPPHPSYRPSSPTTTLKNSIVNAEAKLNEKRSRLRKAKNDHKLIISKIRKELDNYNHRLHSGTDENRQKQRSLQLERNIRQTEEATALLEDQLDNLENVPEEELRKWSDQKAKYEHELGLLNSAKEELASARSAIAREVSSLETELSSAIQRRERLQSRRTRINEQYERIVSANAQGLNERERRAAEQFAREQDQAKLEATFNEQFATIGQSVQEYQLRAQQIWQQCDAIEQAIQQQHQQMLLDPGPLTPEGNLPGTNPFSESALPLGALTSTAPSSRSLLGLSFPPLKSSPLQTASSPVGASSSHPTSPVQQPSYLNFPTSPLVNASSHLDSDFVYRHRSFSNRSARSSLYGSDFMDSSRRQPFQLDLSELLADKRSPGSDSNTALNSGLRPVSSPFQRAGSRGSGSGSNGSGGSGSGSGSPSSVYGKTN.

2 disordered regions span residues 1–94 and 109–143; these read MPRS…PDHL and NDGV…SNAS. Residues 33–63 are compositionally biased toward low complexity; sequence NGHLNGNLNGGSASSSLSSSQVDLPSSRSSS. Polar residues-rich tracts occupy residues 68–83 and 131–143; these read PTTT…TPDS and SATG…SNAS. Transmembrane regions (helical) follow at residues 163–183, 216–236, and 259–279; these read IAIL…VQFL, LGTM…FMWT, and FGKN…MHLV. 5 disordered regions span residues 343–371, 580–603, 831–855, 879–905, and 963–1019; these read ARRS…AGSQ, DAEQ…PTTT, LDPG…ALPL, SPLQ…PSYL, and DKRS…GKTN. A compositionally biased stretch (polar residues) spans 580–589; it reads DAEQVSSVST. The stretch at 602–788 forms a coiled coil; it reads TTLKNSIVNA…REQDQAKLEA (187 aa). Over residues 992–1008 the composition is skewed to gly residues; it reads RGSGSGSNGSGGSGSGS.

This sequence belongs to the acrB family.

It is found in the membrane. Component of the regulatory network controlling carbon source utilization through ubiquitination and deubiquitination involving creA, creB, creC, creD and acrB. Involved in resistance to acriflavine, and required for normal growth on a range of sole carbon sources, including fructose, cellobiose, raffinose, and starch, and reduced utilization of amino acids, including GABA and beta-alanine, as sole carbon and nitrogen sources. The sequence is that of Probable ubiquitination network signaling protein acrB (acrB) from Aspergillus fumigatus (strain CBS 144.89 / FGSC A1163 / CEA10) (Neosartorya fumigata).